The chain runs to 462 residues: L-seryl-tRNA(Sec) selenium transferase (462 aa).

Lysine 292 is subject to N6-(pyridoxal phosphate)lysine.

This sequence belongs to the SelA family. Pyridoxal 5'-phosphate serves as cofactor.

Its subcellular location is the cytoplasm. It catalyses the reaction L-seryl-tRNA(Sec) + selenophosphate + H(+) = L-selenocysteinyl-tRNA(Sec) + phosphate. It participates in aminoacyl-tRNA biosynthesis; selenocysteinyl-tRNA(Sec) biosynthesis; selenocysteinyl-tRNA(Sec) from L-seryl-tRNA(Sec) (bacterial route): step 1/1. Functionally, converts seryl-tRNA(Sec) to selenocysteinyl-tRNA(Sec) required for selenoprotein biosynthesis. The polypeptide is L-seryl-tRNA(Sec) selenium transferase (Geobacter metallireducens (strain ATCC 53774 / DSM 7210 / GS-15)).